The sequence spans 200 residues: Holliday junction resolvase RecU (200 aa).

Residues Thr82, Asp84, Glu97, and Gln116 each contribute to the Mg(2+) site.

It belongs to the RecU family. Mg(2+) is required as a cofactor.

The protein resides in the cytoplasm. It catalyses the reaction Endonucleolytic cleavage at a junction such as a reciprocal single-stranded crossover between two homologous DNA duplexes (Holliday junction).. In terms of biological role, endonuclease that resolves Holliday junction intermediates in genetic recombination. Cleaves mobile four-strand junctions by introducing symmetrical nicks in paired strands. Promotes annealing of linear ssDNA with homologous dsDNA. Required for DNA repair, homologous recombination and chromosome segregation. This Streptococcus gordonii (strain Challis / ATCC 35105 / BCRC 15272 / CH1 / DL1 / V288) protein is Holliday junction resolvase RecU.